Consider the following 82-residue polypeptide: DNA-directed RNA polymerase subunit Rpo5 (82 aa).

It belongs to the archaeal Rpo5/eukaryotic RPB5 RNA polymerase subunit family. Part of the RNA polymerase complex.

It localises to the cytoplasm. The enzyme catalyses RNA(n) + a ribonucleoside 5'-triphosphate = RNA(n+1) + diphosphate. DNA-dependent RNA polymerase (RNAP) catalyzes the transcription of DNA into RNA using the four ribonucleoside triphosphates as substrates. The sequence is that of DNA-directed RNA polymerase subunit Rpo5 from Thermococcus celer.